We begin with the raw amino-acid sequence, 339 residues long: tRNA methyltransferase 10 homolog A (339 aa).

Disordered regions lie at residues 1–90 (MSSE…HDRK) and 282–339 (DKAC…SLPH). The segment covering 14-35 (NVDKKQGINEDQEESQKPRLGE) has biased composition (basic and acidic residues). Residues 52–81 (KQWEEQRELRKQKRKEKRKRKKLERQCQME) are a coiled coil. Over residues 61–74 (RKQKRKEKRKRKKL) the composition is skewed to basic residues. The SAM-dependent MTase TRM10-type domain maps to 89–279 (RKRVRRDVVH…TILPQRKGAV (191 aa)). Positions 300 to 309 (GGSDSDSSEE) are enriched in acidic residues. Residues 310-330 (EYSRNELDSPHEEKQDKENHT) show a composition bias toward basic and acidic residues. S336 bears the Phosphoserine mark.

The protein belongs to the class IV-like SAM-binding methyltransferase superfamily. TRM10 family. As to quaternary structure, interacts with tRNA. As to expression, expressed in embryonic and fetal brain. It is expressed throughout the dorsal telencephalon at 8 and 11 weeks of gestation, with highest expression in ventricular zone and marginal zone. Detected in cerebellar cortex and nuclei, but not in dorsal telencephalon, at later stages.

Its subcellular location is the nucleus. It localises to the nucleolus. The catalysed reaction is guanosine(9) in tRNA + S-adenosyl-L-methionine = N(1)-methylguanosine(9) in tRNA + S-adenosyl-L-homocysteine + H(+). S-adenosyl-L-methionine-dependent guanine N(1)-methyltransferase that catalyzes the formation of N(1)-methylguanine at position 9 (m1G9) in tRNAs. Probably not able to catalyze formation of N(1)-methyladenine at position 9 (m1A9) in tRNAs. This chain is tRNA methyltransferase 10 homolog A (TRMT10A), found in Homo sapiens (Human).